Here is a 169-residue protein sequence, read N- to C-terminus: Sec-independent protein translocase protein TatB (169 aa).

Residues 2-22 form a helical membrane-spanning segment; it reads SPGIGMPELLVVLVLALVVVG. Residues 106-169 are disordered; it reads NQAETDADKA…AKPVDEIKGR (64 aa).

It belongs to the TatB family. As to quaternary structure, the Tat system comprises two distinct complexes: a TatABC complex, containing multiple copies of TatA, TatB and TatC subunits, and a separate TatA complex, containing only TatA subunits. Substrates initially bind to the TatABC complex, which probably triggers association of the separate TatA complex to form the active translocon.

Its subcellular location is the cell inner membrane. In terms of biological role, part of the twin-arginine translocation (Tat) system that transports large folded proteins containing a characteristic twin-arginine motif in their signal peptide across membranes. Together with TatC, TatB is part of a receptor directly interacting with Tat signal peptides. TatB may form an oligomeric binding site that transiently accommodates folded Tat precursor proteins before their translocation. This is Sec-independent protein translocase protein TatB from Maricaulis maris (strain MCS10) (Caulobacter maris).